Here is a 381-residue protein sequence, read N- to C-terminus: Cytochrome b (381 aa).

4 helical membrane passes run 33 to 53, 77 to 98, 113 to 133, and 178 to 198; these read FGSL…FLAM, WLLR…FLHV, WNIG…GYVL, and FFAF…VHLL. Residues His-83 and His-97 each contribute to the heme b site. Residues His-182 and His-196 each coordinate heme b. An a ubiquinone-binding site is contributed by His-201. 4 helical membrane passes run 226–246, 288–308, 320–340, and 347–367; these read IKDA…ALFS, LGGV…PLLH, VSQT…WIGG, and FIII…VMMP.

Belongs to the cytochrome b family. The cytochrome bc1 complex contains 11 subunits: 3 respiratory subunits (MT-CYB, CYC1 and UQCRFS1), 2 core proteins (UQCRC1 and UQCRC2) and 6 low-molecular weight proteins (UQCRH/QCR6, UQCRB/QCR7, UQCRQ/QCR8, UQCR10/QCR9, UQCR11/QCR10 and a cleavage product of UQCRFS1). This cytochrome bc1 complex then forms a dimer. Heme b is required as a cofactor.

The protein localises to the mitochondrion inner membrane. Its function is as follows. Component of the ubiquinol-cytochrome c reductase complex (complex III or cytochrome b-c1 complex) that is part of the mitochondrial respiratory chain. The b-c1 complex mediates electron transfer from ubiquinol to cytochrome c. Contributes to the generation of a proton gradient across the mitochondrial membrane that is then used for ATP synthesis. The polypeptide is Cytochrome b (MT-CYB) (Dasyurus hallucatus (Northern quoll)).